Here is a 253-residue protein sequence, read N- to C-terminus: 3-deoxy-manno-octulosonate cytidylyltransferase (253 aa).

The protein belongs to the KdsB family.

It localises to the cytoplasm. It carries out the reaction 3-deoxy-alpha-D-manno-oct-2-ulosonate + CTP = CMP-3-deoxy-beta-D-manno-octulosonate + diphosphate. It participates in nucleotide-sugar biosynthesis; CMP-3-deoxy-D-manno-octulosonate biosynthesis; CMP-3-deoxy-D-manno-octulosonate from 3-deoxy-D-manno-octulosonate and CTP: step 1/1. It functions in the pathway bacterial outer membrane biogenesis; lipopolysaccharide biosynthesis. Its function is as follows. Activates KDO (a required 8-carbon sugar) for incorporation into bacterial lipopolysaccharide in Gram-negative bacteria. This is 3-deoxy-manno-octulosonate cytidylyltransferase from Acidithiobacillus ferrooxidans (strain ATCC 23270 / DSM 14882 / CIP 104768 / NCIMB 8455) (Ferrobacillus ferrooxidans (strain ATCC 23270)).